The primary structure comprises 70 residues: DNA-directed RNA polymerase subunit omega (70 aa).

This sequence belongs to the RNA polymerase subunit omega family. In terms of assembly, the RNAP catalytic core consists of 2 alpha, 1 beta, 1 beta' and 1 omega subunit. When a sigma factor is associated with the core the holoenzyme is formed, which can initiate transcription.

It carries out the reaction RNA(n) + a ribonucleoside 5'-triphosphate = RNA(n+1) + diphosphate. Functionally, promotes RNA polymerase assembly. Latches the N- and C-terminal regions of the beta' subunit thereby facilitating its interaction with the beta and alpha subunits. The polypeptide is DNA-directed RNA polymerase subunit omega (Bacillus cereus (strain G9842)).